A 244-amino-acid polypeptide reads, in one-letter code: Ribonuclease 3 (244 aa).

The RNase III domain occupies 17-146; it reads FEKKMQELNL…FVGALYLDQG (130 aa). E59 provides a ligand contact to Mg(2+). The active site involves D63. Positions 132 and 135 each coordinate Mg(2+). E135 is a catalytic residue. The DRBM domain occupies 172 to 241; sequence DFKTQFQEYV…AERAYKILKN (70 aa).

Belongs to the ribonuclease III family. As to quaternary structure, homodimer. The cofactor is Mg(2+).

The protein resides in the cytoplasm. The catalysed reaction is Endonucleolytic cleavage to 5'-phosphomonoester.. Its function is as follows. Digests double-stranded RNA. Involved in the processing of primary rRNA transcript to yield the immediate precursors to the large and small rRNAs (23S and 16S). Processes some mRNAs, and tRNAs when they are encoded in the rRNA operon. Processes pre-crRNA and tracrRNA of type II CRISPR loci if present in the organism. In Staphylococcus saprophyticus subsp. saprophyticus (strain ATCC 15305 / DSM 20229 / NCIMB 8711 / NCTC 7292 / S-41), this protein is Ribonuclease 3.